We begin with the raw amino-acid sequence, 283 residues long: Peroxisome biogenesis protein 22 (283 aa).

The residue at position 2 (Ala2) is an N-acetylalanine. A helical transmembrane segment spans residues Ile45–Ile62. A disordered region spans residues Gly66–Arg107. Residues Ala81–Ala100 are compositionally biased toward low complexity.

This sequence belongs to the peroxin-22 family. As to quaternary structure, interacts with PEX4.

It is found in the peroxisome membrane. Its function is as follows. May be tethered PEX4 to the peroxisome membrane and may be involved in a late step of the matrix protein import. Does not play a role in the biogenesis of the peroxisomal membrane. The sequence is that of Peroxisome biogenesis protein 22 (PEX22) from Arabidopsis thaliana (Mouse-ear cress).